A 571-amino-acid chain; its full sequence is Cerebral cavernous malformations 2 protein-like (571 aa).

3 disordered regions span residues Ala164–Glu193, Ala212–Pro295, and Leu544–Leu571. A compositionally biased stretch (basic and acidic residues) spans Pro184–Glu193. Gly residues predominate over residues Ala212–Ser223. A compositionally biased stretch (basic and acidic residues) spans Trp237 to His251. Residues Gly253–Gly264 show a composition bias toward gly residues. Positions Gly286–Pro295 are enriched in pro residues. Residues Ala545–Glu555 are compositionally biased toward acidic residues.

The protein belongs to the CCM2 family.

The polypeptide is Cerebral cavernous malformations 2 protein-like (CCM2L) (Homo sapiens (Human)).